Consider the following 325-residue polypeptide: Porphobilinogen deaminase (325 aa).

Residue cysteine 253 is modified to S-(dipyrrolylmethanemethyl)cysteine.

This sequence belongs to the HMBS family. The cofactor is dipyrromethane.

It carries out the reaction 4 porphobilinogen + H2O = hydroxymethylbilane + 4 NH4(+). The protein operates within porphyrin-containing compound metabolism; protoporphyrin-IX biosynthesis; coproporphyrinogen-III from 5-aminolevulinate: step 2/4. Its function is as follows. Tetrapolymerization of the monopyrrole PBG into the hydroxymethylbilane pre-uroporphyrinogen in several discrete steps. The chain is Porphobilinogen deaminase (hemC) from Dictyostelium discoideum (Social amoeba).